The chain runs to 114 residues: Beta-microseminoprotein J1 (114 aa).

Residues 1-20 (MNVLLGGLVIFATFVTLCNA) form the signal peptide. Cystine bridges form between Cys22–Cys70, Cys38–Cys62, Cys57–Cys93, Cys60–Cys69, and Cys84–Cys107.

This sequence belongs to the beta-microseminoprotein family.

It localises to the secreted. In Saguinus oedipus (Cotton-top tamarin), this protein is Beta-microseminoprotein J1 (MSPJ).